A 165-amino-acid chain; its full sequence is Cytochrome c-type biogenesis protein CcmE (165 aa).

Over 1–7 (MTRKQKR) the chain is Cytoplasmic. The helical; Signal-anchor for type II membrane protein transmembrane segment at 8–28 (LAVIAGGMGFIIAAVLLVMFA) threads the bilayer. At 29-165 (FSQSVAYFYM…GQGQEAKATR (137 aa)) the chain is on the periplasmic side. 2 residues coordinate heme: His-124 and Tyr-128. Low complexity predominate over residues 144–154 (QDGQGAQSQAG). Residues 144 to 165 (QDGQGAQSQAGQGQGQEAKATR) are disordered.

This sequence belongs to the CcmE/CycJ family.

It localises to the cell inner membrane. Its function is as follows. Heme chaperone required for the biogenesis of c-type cytochromes. Transiently binds heme delivered by CcmC and transfers the heme to apo-cytochromes in a process facilitated by CcmF and CcmH. The polypeptide is Cytochrome c-type biogenesis protein CcmE (Rhizobium etli (strain CIAT 652)).